The primary structure comprises 701 residues: Interleukin-1 receptor accessory protein-like 1-A (701 aa).

Positions Met-1–Ser-19 are cleaved as a signal peptide. The Extracellular portion of the chain corresponds to Leu-20–Thr-361. In terms of domain architecture, Ig-like C2-type 1 spans Thr-33 to Ser-133. A disulfide bridge connects residues Cys-54 and Cys-121. N-linked (GlcNAc...) asparagine glycosylation is found at Asn-64, Asn-125, Asn-141, Asn-216, Asn-267, and Asn-334. 2 Ig-like C2-type domains span residues Cys-146–Ser-235 and Pro-245–Gly-353. Residues Cys-167 and Cys-219 are joined by a disulfide bond. Cys-270 and Cys-337 are oxidised to a cystine. The helical transmembrane segment at Val-362–Tyr-382 threads the bilayer. Residues Lys-383–Trp-701 are Cytoplasmic-facing. A TIR domain is found at Lys-407 to Met-563. The active site involves Glu-495. Residues Pro-568–Trp-701 are required for synaptic vesicle accumulation during synaptogenesis.

This sequence belongs to the interleukin-1 receptor family.

It localises to the cell membrane. The protein resides in the cytoplasm. The catalysed reaction is NAD(+) + H2O = ADP-D-ribose + nicotinamide + H(+). Its function is as follows. May regulate secretion and presynaptic differentiation through inhibition of the activity of N-type voltage-gated calcium channel. During presynaptic differentiation may regulate both synaptic vesicle accumulation in axon terminals and subsequent axon terminal remodeling. This Danio rerio (Zebrafish) protein is Interleukin-1 receptor accessory protein-like 1-A (il1rapl1a).